Reading from the N-terminus, the 304-residue chain is Lipid droplet-associated hydrolase (304 aa).

The active-site Nucleophile is the S119. Active-site charge relay system residues include D250 and H279.

Belongs to the AB hydrolase superfamily. LDAH family.

The protein resides in the lipid droplet. The catalysed reaction is a cholesterol ester + H2O = cholesterol + a fatty acid + H(+). Its function is as follows. Probable serine lipid hydrolase associated with lipid droplets. Has low cholesterol esterase activity. Appears to lack triglyceride lipase activity. Involved in cholesterol and triglyceride homeostasis; stimulates cellular triglyceride accumulation and cellular cholesterol release. The chain is Lipid droplet-associated hydrolase from Dictyostelium discoideum (Social amoeba).